Consider the following 520-residue polypeptide: Peptide chain release factor 3 (520 aa).

The 270-residue stretch at 8-277 (ESRKTFAIIS…HAPMPNARQT (270 aa)) folds into the tr-type G domain. Residues 17-24 (SHPDAGKT), 85-89 (DTPGH), and 139-142 (NKLD) each bind GTP.

This sequence belongs to the TRAFAC class translation factor GTPase superfamily. Classic translation factor GTPase family. PrfC subfamily.

Its subcellular location is the cytoplasm. In terms of biological role, increases the formation of ribosomal termination complexes and stimulates activities of RF-1 and RF-2. It binds guanine nucleotides and has strong preference for UGA stop codons. It may interact directly with the ribosome. The stimulation of RF-1 and RF-2 is significantly reduced by GTP and GDP, but not by GMP. This is Peptide chain release factor 3 from Staphylococcus haemolyticus (strain JCSC1435).